The following is a 204-amino-acid chain: UPF0637 protein SAR1080 (204 aa).

It belongs to the UPF0637 family.

The protein is UPF0637 protein SAR1080 of Staphylococcus aureus (strain MRSA252).